The sequence spans 201 residues: 3-isopropylmalate dehydratase small subunit (201 aa).

Belongs to the LeuD family. LeuD type 1 subfamily. Heterodimer of LeuC and LeuD.

It catalyses the reaction (2R,3S)-3-isopropylmalate = (2S)-2-isopropylmalate. Its pathway is amino-acid biosynthesis; L-leucine biosynthesis; L-leucine from 3-methyl-2-oxobutanoate: step 2/4. Its function is as follows. Catalyzes the isomerization between 2-isopropylmalate and 3-isopropylmalate, via the formation of 2-isopropylmaleate. This is 3-isopropylmalate dehydratase small subunit from Salmonella schwarzengrund (strain CVM19633).